A 413-amino-acid polypeptide reads, in one-letter code: uncharacterized protein (413 aa).

The Response regulatory domain occupies 2–129 (RILIVDDENT…KTTWKLRLME (128 aa)). Aspartate 54 is modified (4-aspartylphosphate).

This is an uncharacterized protein from Sinorhizobium fredii (strain NBRC 101917 / NGR234).